Reading from the N-terminus, the 182-residue chain is UPF0397 protein BT9727_2423 (182 aa).

The next 5 membrane-spanning stretches (helical) occupy residues 9-29, 40-60, 71-91, 114-134, and 142-162; these read VVAIGIGSALYGILGLWGFSI, AILTVFGALFGPVAGLLIGLI, WGIWWGWVISSGIIGFTMGFI, ITGLIGIVIAIIFAGAFDIIV, and IVIQVLGATIADVIVFLVLGL.

Belongs to the UPF0397 family.

The protein localises to the cell membrane. In Bacillus thuringiensis subsp. konkukian (strain 97-27), this protein is UPF0397 protein BT9727_2423.